A 591-amino-acid polypeptide reads, in one-letter code: Aspartate--tRNA ligase (591 aa).

Residue Glu174 coordinates L-aspartate. An aspartate region spans residues 198-201 (QLFK). Residue Arg220 participates in L-aspartate binding. Residues 220 to 222 (RDE) and Gln229 contribute to the ATP site. Residue His450 participates in L-aspartate binding. Glu486 lines the ATP pocket. L-aspartate is bound at residue Arg493. 538-541 (GLDR) contributes to the ATP binding site.

This sequence belongs to the class-II aminoacyl-tRNA synthetase family. Type 1 subfamily. In terms of assembly, homodimer.

It is found in the cytoplasm. The catalysed reaction is tRNA(Asp) + L-aspartate + ATP = L-aspartyl-tRNA(Asp) + AMP + diphosphate. In terms of biological role, catalyzes the attachment of L-aspartate to tRNA(Asp) in a two-step reaction: L-aspartate is first activated by ATP to form Asp-AMP and then transferred to the acceptor end of tRNA(Asp). This chain is Aspartate--tRNA ligase, found in Leuconostoc mesenteroides subsp. mesenteroides (strain ATCC 8293 / DSM 20343 / BCRC 11652 / CCM 1803 / JCM 6124 / NCDO 523 / NBRC 100496 / NCIMB 8023 / NCTC 12954 / NRRL B-1118 / 37Y).